The sequence spans 525 residues: ATP synthase subunit alpha (525 aa).

Residue 169-176 participates in ATP binding; it reads GDRQTGKT.

Belongs to the ATPase alpha/beta chains family. In terms of assembly, F-type ATPases have 2 components, CF(1) - the catalytic core - and CF(0) - the membrane proton channel. CF(1) has five subunits: alpha(3), beta(3), gamma(1), delta(1), epsilon(1). CF(0) has three main subunits: a(1), b(2) and c(9-12). The alpha and beta chains form an alternating ring which encloses part of the gamma chain. CF(1) is attached to CF(0) by a central stalk formed by the gamma and epsilon chains, while a peripheral stalk is formed by the delta and b chains.

Its subcellular location is the cell membrane. The catalysed reaction is ATP + H2O + 4 H(+)(in) = ADP + phosphate + 5 H(+)(out). Its function is as follows. Produces ATP from ADP in the presence of a proton gradient across the membrane. The alpha chain is a regulatory subunit. This chain is ATP synthase subunit alpha, found in Mesoplasma florum (strain ATCC 33453 / NBRC 100688 / NCTC 11704 / L1) (Acholeplasma florum).